Consider the following 429-residue polypeptide: 3-phosphoshikimate 1-carboxyvinyltransferase (429 aa).

Positions 22, 23, and 27 each coordinate 3-phosphoshikimate. Lys22 lines the phosphoenolpyruvate pocket. Residues Gly94 and Arg122 each coordinate phosphoenolpyruvate. 3-phosphoshikimate is bound by residues Ser167, Gln169, Asp315, and Lys342. Gln169 contacts phosphoenolpyruvate. The Proton acceptor role is filled by Asp315. Residues Arg346 and Arg388 each coordinate phosphoenolpyruvate.

It belongs to the EPSP synthase family. As to quaternary structure, monomer.

The protein localises to the cytoplasm. The enzyme catalyses 3-phosphoshikimate + phosphoenolpyruvate = 5-O-(1-carboxyvinyl)-3-phosphoshikimate + phosphate. It functions in the pathway metabolic intermediate biosynthesis; chorismate biosynthesis; chorismate from D-erythrose 4-phosphate and phosphoenolpyruvate: step 6/7. Catalyzes the transfer of the enolpyruvyl moiety of phosphoenolpyruvate (PEP) to the 5-hydroxyl of shikimate-3-phosphate (S3P) to produce enolpyruvyl shikimate-3-phosphate and inorganic phosphate. The sequence is that of 3-phosphoshikimate 1-carboxyvinyltransferase from Geobacter metallireducens (strain ATCC 53774 / DSM 7210 / GS-15).